A 220-amino-acid chain; its full sequence is Histone deacetylase complex subunit SAP30 (220 aa).

Positions Met1–Lys129 are interaction with NCOR1. A Phosphothreonine modification is found at Thr5. The Atypical zinc finger occupies Cys67 to His115. Residue Lys87 forms a Glycyl lysine isopeptide (Lys-Gly) (interchain with G-Cter in SUMO2) linkage. Positions Arg123–Ile143 are disordered. The interval Gly130–His220 is interaction with SIN3A. Ser131 and Ser138 each carry phosphoserine. The residue at position 145 (Thr145) is a Phosphothreonine. Glycyl lysine isopeptide (Lys-Gly) (interchain with G-Cter in SUMO2) cross-links involve residues Lys194 and Lys214.

It belongs to the SAP30 family. In terms of assembly, component of the histone deacetylase complex that includes at least SIN3A, HDAC1 and HDAC2. Found in a complex composed of at least SINHCAF, SIN3A, HDAC1, SAP30, RBBP4, OGT and TET1. Interacts with HDAC1. Interacts with SIN3A, SIN3B, HDAC2, RBBP4 and NCOR1. Interacts directly with SAMSN1. Interacts with HCFC1. Interacts with SAP30BP.

It is found in the nucleus. Involved in the functional recruitment of the Sin3-histone deacetylase complex (HDAC) to a specific subset of N-CoR corepressor complexes. Capable of transcription repression by N-CoR. Active in deacetylating core histone octamers (when in a complex) but inactive in deacetylating nucleosomal histones. The chain is Histone deacetylase complex subunit SAP30 from Mus musculus (Mouse).